A 100-amino-acid chain; its full sequence is uncharacterized protein (100 aa).

This is an uncharacterized protein from Acidianus filamentous virus 2 (isolate Italy/Pozzuoli) (AFV-2).